The primary structure comprises 102 residues: Small ribosomal subunit protein uS10 (102 aa).

The protein belongs to the universal ribosomal protein uS10 family. Part of the 30S ribosomal subunit.

Its function is as follows. Involved in the binding of tRNA to the ribosomes. The chain is Small ribosomal subunit protein uS10 from Rhodopseudomonas palustris (strain BisB18).